Here is a 228-residue protein sequence, read N- to C-terminus: Cytidylate kinase (228 aa).

An ATP-binding site is contributed by 17–25 (GPTASGKGT).

It belongs to the cytidylate kinase family. Type 1 subfamily.

The protein localises to the cytoplasm. It carries out the reaction CMP + ATP = CDP + ADP. The enzyme catalyses dCMP + ATP = dCDP + ADP. In Burkholderia pseudomallei (strain 1106a), this protein is Cytidylate kinase.